Reading from the N-terminus, the 219-residue chain is Protein ERP1 (219 aa).

An N-terminal signal peptide occupies residues 1-22 (MLLTSLLQVFACCLVLPAQVTA). The Lumenal portion of the chain corresponds to 23–186 (FYYYTSGAER…RDASEAVNSR (164 aa)). The 100-residue stretch at 32-131 (RKCFHKELSK…KTKIDVEFQV (100 aa)) folds into the GOLD domain. The chain crosses the membrane as a helical span at residues 187 to 207 (AMWWIVIQLIVLAVTCGWQMK). At 208–219 (HLGKFFVKQKIL) the chain is on the cytoplasmic side.

The protein belongs to the EMP24/GP25L family. As to quaternary structure, associates with EMP24, ERV25 and ERP2.

It localises to the endoplasmic reticulum membrane. Involved in vesicular protein trafficking. The protein is Protein ERP1 (ERP1) of Saccharomyces cerevisiae (strain ATCC 204508 / S288c) (Baker's yeast).